The primary structure comprises 194 residues: dTTP/UTP pyrophosphatase (194 aa).

The Proton acceptor role is filled by aspartate 69.

This sequence belongs to the Maf family. YhdE subfamily. A divalent metal cation is required as a cofactor.

The protein resides in the cytoplasm. The enzyme catalyses dTTP + H2O = dTMP + diphosphate + H(+). It carries out the reaction UTP + H2O = UMP + diphosphate + H(+). Nucleoside triphosphate pyrophosphatase that hydrolyzes dTTP and UTP. May have a dual role in cell division arrest and in preventing the incorporation of modified nucleotides into cellular nucleic acids. This Symbiobacterium thermophilum (strain DSM 24528 / JCM 14929 / IAM 14863 / T) protein is dTTP/UTP pyrophosphatase.